Reading from the N-terminus, the 517-residue chain is Maturase K (517 aa).

It belongs to the intron maturase 2 family. MatK subfamily.

The protein localises to the plastid. The protein resides in the chloroplast. Functionally, usually encoded in the trnK tRNA gene intron. Probably assists in splicing its own and other chloroplast group II introns. This chain is Maturase K, found in Phalaenopsis japonica (Orchid).